The primary structure comprises 177 residues: MLQTYKDQLPDYAKDLKLNLTQVLSESPSSELSNQQITGVALAVAYATRNRQLIELIFQKAEAELDESTLQAIKAAASIMAMNNIYYRFVHLVKDSEYQRLPANLRMNIIANPGIDKKDFELYSLAVSAINGCGLCIDAHANTLIKAGFSKHSIQHVIRIAAVLNGLAQVSIIENKT.

Catalysis depends on C133, which acts as the Proton donor. C133 and C136 are joined by a disulfide. C136 functions as the Cysteine sulfenic acid (-SOH) intermediate in the catalytic mechanism.

This sequence belongs to the AhpD family.

It catalyses the reaction N(6)-[(R)-dihydrolipoyl]-L-lysyl-[lipoyl-carrier protein] + a hydroperoxide = N(6)-[(R)-lipoyl]-L-lysyl-[lipoyl-carrier protein] + an alcohol + H2O. Functionally, antioxidant protein with alkyl hydroperoxidase activity. Required for the reduction of the AhpC active site cysteine residues and for the regeneration of the AhpC enzyme activity. This is Alkyl hydroperoxide reductase AhpD from Coxiella burnetii (strain CbuG_Q212) (Coxiella burnetii (strain Q212)).